Here is a 684-residue protein sequence, read N- to C-terminus: Translation factor GUF1 homolog, mitochondrial (684 aa).

Residues 82 to 270 form the tr-type G domain; that stretch reads HLIRNFSIIA…AVIERIPQPK (189 aa). Residues 91–98, 163–167, and 217–220 contribute to the GTP site; these read AHVDHGKS, DTPGH, and NKID.

It belongs to the TRAFAC class translation factor GTPase superfamily. Classic translation factor GTPase family. LepA subfamily.

The protein resides in the mitochondrion inner membrane. The catalysed reaction is GTP + H2O = GDP + phosphate + H(+). Functionally, promotes mitochondrial protein synthesis. May act as a fidelity factor of the translation reaction, by catalyzing a one-codon backward translocation of tRNAs on improperly translocated ribosomes. Binds to mitochondrial ribosomes in a GTP-dependent manner. This is Translation factor GUF1 homolog, mitochondrial from Physcomitrium patens (Spreading-leaved earth moss).